The primary structure comprises 122 residues: Small ribosomal subunit protein bS16 (122 aa).

The protein belongs to the bacterial ribosomal protein bS16 family.

The chain is Small ribosomal subunit protein bS16 from Prochlorococcus marinus (strain MIT 9313).